A 339-amino-acid chain; its full sequence is DNA-directed RNA polymerase subunit alpha (339 aa).

The segment at 1–235 is alpha N-terminal domain (alpha-NTD); the sequence is MTIQKNWQEL…DQLNVFVNFE (235 aa). The tract at residues 251-339 is alpha C-terminal domain (alpha-CTD); sequence FNPAFLKKVD…ELAKRFEDHY (89 aa).

The protein belongs to the RNA polymerase alpha chain family. Homodimer. The RNAP catalytic core consists of 2 alpha, 1 beta, 1 beta' and 1 omega subunit. When a sigma factor is associated with the core the holoenzyme is formed, which can initiate transcription.

The enzyme catalyses RNA(n) + a ribonucleoside 5'-triphosphate = RNA(n+1) + diphosphate. DNA-dependent RNA polymerase catalyzes the transcription of DNA into RNA using the four ribonucleoside triphosphates as substrates. The protein is DNA-directed RNA polymerase subunit alpha of Rhodopseudomonas palustris (strain BisB5).